The following is a 92-amino-acid chain: Enhancer of yellow 2 transcription factor (92 aa).

Belongs to the ENY2 family. Component of the nuclear pore complex (NPC)-associated TREX-2 complex (transcription and export complex 2). Component of the SAGA transcription coactivator-HAT complex. Within the SAGA complex, participates in a subcomplex of SAGA called the DUB module (deubiquitination module).

Its subcellular location is the nucleus. The protein resides in the nucleoplasm. Involved in mRNA export coupled transcription activation by association with both the TREX-2 and the SAGA complexes. The transcription regulatory histone acetylation (HAT) complex SAGA is a multiprotein complex that activates transcription by remodeling chromatin and mediating histone acetylation and deubiquitination. Within the SAGA complex, participates in a subcomplex that specifically deubiquitinates histones. The SAGA complex is recruited to specific gene promoters by activators, where it is required for transcription. The TREX-2 complex functions in docking export-competent ribonucleoprotein particles (mRNPs) to the nuclear entrance of the nuclear pore complex (nuclear basket). TREX-2 participates in mRNA export and accurate chromatin positioning in the nucleus by tethering genes to the nuclear periphery. This is Enhancer of yellow 2 transcription factor from Aedes aegypti (Yellowfever mosquito).